A 360-amino-acid chain; its full sequence is Complement control protein homolog (360 aa).

The first 20 residues, 1-20 (MYTLHYICLVLSCVIYFVWT), serve as a signal peptide directing secretion. 4 consecutive Sushi domains span residues 21-81 (LSCP…KCQK), 82-144 (KKCS…ICDI), 145-207 (KKCK…KCEF), and 208-266 (IFCK…ECMK). Cystine bridges form between cysteine 23/cysteine 68, cysteine 54/cysteine 79, cysteine 84/cysteine 125, cysteine 111/cysteine 142, cysteine 147/cysteine 191, cysteine 175/cysteine 205, cysteine 210/cysteine 252, and cysteine 238/cysteine 264. N-linked (GlcNAc...) asparagine; by host glycosylation is found at asparagine 36, asparagine 39, asparagine 46, and asparagine 72. Residue asparagine 155 is glycosylated (N-linked (GlcNAc...) asparagine; by host). N-linked (GlcNAc...) asparagine; by host glycosylation is present at asparagine 294. Residues 328–350 (GVLVIILTTSFIIIGIILTGVCL) traverse the membrane as a helical segment.

Belongs to the receptors of complement activation (RCA) family.

The protein resides in the membrane. It is found in the secreted. The chain is Complement control protein homolog (4) from Saimiriine herpesvirus 2 (strain 11) (SaHV-2).